Reading from the N-terminus, the 308-residue chain is Acetaldehyde dehydrogenase 1 (308 aa).

10–13 is a binding site for NAD(+); the sequence is SGNI. The active-site Acyl-thioester intermediate is cysteine 128. Residues 159–167 and asparagine 285 contribute to the NAD(+) site; that span reads SAGPGTRAN.

Belongs to the acetaldehyde dehydrogenase family.

It catalyses the reaction acetaldehyde + NAD(+) + CoA = acetyl-CoA + NADH + H(+). In Salinispora arenicola (strain CNS-205), this protein is Acetaldehyde dehydrogenase 1.